The primary structure comprises 70 residues: Pyruvate-flavodoxin oxidoreductase (70 aa).

The protein belongs to the pyruvate:ferredoxin/flavodoxin oxidoreductase family.

It carries out the reaction oxidized [flavodoxin] + pyruvate + CoA + 2 H(+) = reduced [flavodoxin] + acetyl-CoA + CO2. Oxidoreductase required for the transfer of electrons from pyruvate to flavodoxin, which reduces nitrogenase. In Anabaena variabilis, this protein is Pyruvate-flavodoxin oxidoreductase (nifJ).